The chain runs to 155 residues: SsrA-binding protein (155 aa).

It belongs to the SmpB family.

The protein localises to the cytoplasm. Functionally, required for rescue of stalled ribosomes mediated by trans-translation. Binds to transfer-messenger RNA (tmRNA), required for stable association of tmRNA with ribosomes. tmRNA and SmpB together mimic tRNA shape, replacing the anticodon stem-loop with SmpB. tmRNA is encoded by the ssrA gene; the 2 termini fold to resemble tRNA(Ala) and it encodes a 'tag peptide', a short internal open reading frame. During trans-translation Ala-aminoacylated tmRNA acts like a tRNA, entering the A-site of stalled ribosomes, displacing the stalled mRNA. The ribosome then switches to translate the ORF on the tmRNA; the nascent peptide is terminated with the 'tag peptide' encoded by the tmRNA and targeted for degradation. The ribosome is freed to recommence translation, which seems to be the essential function of trans-translation. The polypeptide is SsrA-binding protein (Oenococcus oeni (strain ATCC BAA-331 / PSU-1)).